We begin with the raw amino-acid sequence, 780 residues long: Calpain clp-1 (780 aa).

The span at 269–282 (DVDPFVRPGPDPDR) shows a compositional bias: basic and acidic residues. A disordered region spans residues 269–300 (DVDPFVRPGPDPDRGGGGSGPSPISPRPTTEP). Positions 316–611 (LFEDPQFLAN…FEKMEICNLG (296 aa)) constitute a Calpain catalytic domain. Residues C371, H527, and N551 contribute to the active site.

This sequence belongs to the peptidase C2 family. As to expression, expressed in muscle and neuronal tissues. Expressed in the ventral and dorsal nerve cord, intestinal and hypodermal tissues.

It is found in the cytoplasm. The protein resides in the myofibril. The protein localises to the sarcomere. It localises to the m line. Its function is as follows. Calcium-regulated non-lysosomal thiol-protease which catalyzes limited proteolysis of substrates. Required for assembly and maintenance of integrin attachment complexes which are essential for maintenance of adult muscle. Proteolytic activity is activated in response to increased intracellular Ca(2+) levels during cell degeneration and promotes necrotic cell death. This is Calpain clp-1 from Caenorhabditis elegans.